The sequence spans 401 residues: MTDFQFSKVEDAIEAIRQGKIILVTDDEDRENEGDFICAAEFATPENINFMATYGKGLICTPISTEIAKKLNFHPMVAVNQDNHETAFTVSVDHIDTGTGISAFERSITAMKIVDDNAKATDFRRPGHMFPLIAKDGGVLVRNGHTEATVDLARLAGLKHAGLCCEIMADDGTMMTMPDLQKFAVEHNMPFITIQQLQEYRRKHDSLVKQISVVKMPTKYGEFMAHSFVEVISGKEHVALVKGDLTDGEQVLARIHSECLTGDAFGSQRCDCGQQFAAAMTQIEQEGRGVILYLRQEGRGIGLINKLRAYELQDKGMDTVEANVALGFKEDEREYYIGAQMFQQLGVKSIRLLTNNPAKIEGLKEQGLNIVAREPIIVEPNKNDIDYLKVKQIKMGHMFNF.

The segment at 1–203 (MTDFQFSKVE…IQQLQEYRRK (203 aa)) is DHBP synthase. D-ribulose 5-phosphate contacts are provided by residues 30–31 (RE), aspartate 35, 142–146 (RNGHT), and glutamate 166. Glutamate 31 lines the Mg(2+) pocket. Histidine 145 is a binding site for Mg(2+). A GTP cyclohydrolase II region spans residues 204 to 401 (HDSLVKQISV…QIKMGHMFNF (198 aa)). 254–258 (RIHSE) lines the GTP pocket. Cysteine 259, cysteine 270, and cysteine 272 together coordinate Zn(2+). Residues glutamine 275, 297-299 (EGR), and threonine 319 contribute to the GTP site. Aspartate 331 (proton acceptor; for GTP cyclohydrolase activity) is an active-site residue. Catalysis depends on arginine 333, which acts as the Nucleophile; for GTP cyclohydrolase activity. Residues threonine 354 and lysine 359 each contribute to the GTP site.

This sequence in the N-terminal section; belongs to the DHBP synthase family. The protein in the C-terminal section; belongs to the GTP cyclohydrolase II family. It depends on Mg(2+) as a cofactor. Mn(2+) serves as cofactor. Zn(2+) is required as a cofactor.

The catalysed reaction is D-ribulose 5-phosphate = (2S)-2-hydroxy-3-oxobutyl phosphate + formate + H(+). It catalyses the reaction GTP + 4 H2O = 2,5-diamino-6-hydroxy-4-(5-phosphoribosylamino)-pyrimidine + formate + 2 phosphate + 3 H(+). The protein operates within cofactor biosynthesis; riboflavin biosynthesis; 2-hydroxy-3-oxobutyl phosphate from D-ribulose 5-phosphate: step 1/1. It functions in the pathway cofactor biosynthesis; riboflavin biosynthesis; 5-amino-6-(D-ribitylamino)uracil from GTP: step 1/4. Functionally, catalyzes the conversion of D-ribulose 5-phosphate to formate and 3,4-dihydroxy-2-butanone 4-phosphate. Its function is as follows. Catalyzes the conversion of GTP to 2,5-diamino-6-ribosylamino-4(3H)-pyrimidinone 5'-phosphate (DARP), formate and pyrophosphate. The chain is Riboflavin biosynthesis protein RibBA from Actinobacillus pleuropneumoniae serotype 7 (strain AP76).